Consider the following 496-residue polypeptide: Probable cytosol aminopeptidase (496 aa).

Residues Lys-266 and Asp-271 each coordinate Mn(2+). Lys-278 is an active-site residue. Mn(2+)-binding residues include Asp-289, Asp-348, and Glu-350. Residue Arg-352 is part of the active site.

The protein belongs to the peptidase M17 family. It depends on Mn(2+) as a cofactor.

The protein localises to the cytoplasm. The catalysed reaction is Release of an N-terminal amino acid, Xaa-|-Yaa-, in which Xaa is preferably Leu, but may be other amino acids including Pro although not Arg or Lys, and Yaa may be Pro. Amino acid amides and methyl esters are also readily hydrolyzed, but rates on arylamides are exceedingly low.. It catalyses the reaction Release of an N-terminal amino acid, preferentially leucine, but not glutamic or aspartic acids.. In terms of biological role, presumably involved in the processing and regular turnover of intracellular proteins. Catalyzes the removal of unsubstituted N-terminal amino acids from various peptides. This is Probable cytosol aminopeptidase from Stutzerimonas stutzeri (strain A1501) (Pseudomonas stutzeri).